We begin with the raw amino-acid sequence, 1295 residues long: Phosphoribosylformylglycinamidine synthase (1295 aa).

The interval 302 to 327 is disordered; the sequence is SPWPGASTGSGGEIRDEGATGRGAKP. ATP-binding positions include 306-317 and A677; that span reads GASTGSGGEIRD. 4 residues coordinate Mg(2+): D678, E717, N721, and D884. S886 is a binding site for ATP. One can recognise a Glutamine amidotransferase type-1 domain in the interval 1042 to 1295; sequence VAVLREQGVN…IFRNARKQLG (254 aa). C1135 functions as the Nucleophile in the catalytic mechanism. Catalysis depends on residues H1260 and E1262.

It in the N-terminal section; belongs to the FGAMS family. As to quaternary structure, monomer.

The protein localises to the cytoplasm. It carries out the reaction N(2)-formyl-N(1)-(5-phospho-beta-D-ribosyl)glycinamide + L-glutamine + ATP + H2O = 2-formamido-N(1)-(5-O-phospho-beta-D-ribosyl)acetamidine + L-glutamate + ADP + phosphate + H(+). It participates in purine metabolism; IMP biosynthesis via de novo pathway; 5-amino-1-(5-phospho-D-ribosyl)imidazole from N(2)-formyl-N(1)-(5-phospho-D-ribosyl)glycinamide: step 1/2. Its function is as follows. Phosphoribosylformylglycinamidine synthase involved in the purines biosynthetic pathway. Catalyzes the ATP-dependent conversion of formylglycinamide ribonucleotide (FGAR) and glutamine to yield formylglycinamidine ribonucleotide (FGAM) and glutamate. This chain is Phosphoribosylformylglycinamidine synthase, found in Photorhabdus laumondii subsp. laumondii (strain DSM 15139 / CIP 105565 / TT01) (Photorhabdus luminescens subsp. laumondii).